Consider the following 342-residue polypeptide: Keratin-associated protein 29-1 (342 aa).

5 repeat units span residues 5-9 (CCPEN), 91-95 (CCASD), 239-243 (CCVPP), 309-313 (CCVTG), and 324-328 (CCPPT). Residues 5–328 (CCPENPTAVP…SSGPGCCPPT (324 aa)) are 5 X 5 AA repeats of C-C-X(3).

This sequence belongs to the KRTAP type 10 family.

The protein is Keratin-associated protein 29-1 (Krtap29-1) of Mus musculus (Mouse).